We begin with the raw amino-acid sequence, 351 residues long: Nicotinate-nucleotide--dimethylbenzimidazole phosphoribosyltransferase (351 aa).

The active-site Proton acceptor is E315.

This sequence belongs to the CobT family.

It catalyses the reaction 5,6-dimethylbenzimidazole + nicotinate beta-D-ribonucleotide = alpha-ribazole 5'-phosphate + nicotinate + H(+). The protein operates within nucleoside biosynthesis; alpha-ribazole biosynthesis; alpha-ribazole from 5,6-dimethylbenzimidazole: step 1/2. Catalyzes the synthesis of alpha-ribazole-5'-phosphate from nicotinate mononucleotide (NAMN) and 5,6-dimethylbenzimidazole (DMB). In Acetivibrio thermocellus (strain ATCC 27405 / DSM 1237 / JCM 9322 / NBRC 103400 / NCIMB 10682 / NRRL B-4536 / VPI 7372) (Clostridium thermocellum), this protein is Nicotinate-nucleotide--dimethylbenzimidazole phosphoribosyltransferase.